Here is a 263-residue protein sequence, read N- to C-terminus: uncharacterized protein (263 aa).

31–38 contributes to the ATP binding site; it reads GPTGSGKT.

This sequence belongs to the CbbQ/NirQ/NorQ/GpvN family.

This is an uncharacterized protein from Staphylococcus aureus (strain bovine RF122 / ET3-1).